A 348-amino-acid polypeptide reads, in one-letter code: Phosphate acyltransferase (348 aa).

It belongs to the PlsX family. In terms of assembly, homodimer. Probably interacts with PlsY.

It localises to the cytoplasm. The enzyme catalyses a fatty acyl-[ACP] + phosphate = an acyl phosphate + holo-[ACP]. It functions in the pathway lipid metabolism; phospholipid metabolism. Functionally, catalyzes the reversible formation of acyl-phosphate (acyl-PO(4)) from acyl-[acyl-carrier-protein] (acyl-ACP). This enzyme utilizes acyl-ACP as fatty acyl donor, but not acyl-CoA. The sequence is that of Phosphate acyltransferase from Francisella philomiragia subsp. philomiragia (strain ATCC 25017 / CCUG 19701 / FSC 153 / O#319-036).